Consider the following 309-residue polypeptide: 2-phospho-L-lactate transferase (309 aa).

The 7,8-didemethyl-8-hydroxy-5-deazariboflavin site is built by aspartate 50 and lysine 89.

Belongs to the CofD family. In terms of assembly, homodimer. Mg(2+) serves as cofactor.

The enzyme catalyses (2S)-lactyl-2-diphospho-5'-guanosine + 7,8-didemethyl-8-hydroxy-5-deazariboflavin = oxidized coenzyme F420-0 + GMP + H(+). The protein operates within cofactor biosynthesis; coenzyme F420 biosynthesis. Functionally, catalyzes the transfer of the 2-phospholactate moiety from (2S)-lactyl-2-diphospho-5'-guanosine to 7,8-didemethyl-8-hydroxy-5-deazariboflavin (FO) with the formation of oxidized coenzyme F420-0 and GMP. This chain is 2-phospho-L-lactate transferase, found in Methanococcus maripaludis (strain C7 / ATCC BAA-1331).